A 413-amino-acid chain; its full sequence is Multifunctional CCA protein (413 aa).

Residues glycine 8 and arginine 11 each coordinate ATP. Residues glycine 8 and arginine 11 each contribute to the CTP site. Mg(2+) contacts are provided by aspartate 21 and aspartate 23. The ATP site is built by arginine 91, arginine 143, and arginine 146. Residues arginine 91, arginine 143, and arginine 146 each coordinate CTP. The HD domain maps to 232–333 (TGVHVMMVVD…VRLFERSDAL (102 aa)).

Belongs to the tRNA nucleotidyltransferase/poly(A) polymerase family. Bacterial CCA-adding enzyme type 1 subfamily. Monomer. Can also form homodimers and oligomers. The cofactor is Mg(2+). It depends on Ni(2+) as a cofactor.

It catalyses the reaction a tRNA precursor + 2 CTP + ATP = a tRNA with a 3' CCA end + 3 diphosphate. It carries out the reaction a tRNA with a 3' CCA end + 2 CTP + ATP = a tRNA with a 3' CCACCA end + 3 diphosphate. Functionally, catalyzes the addition and repair of the essential 3'-terminal CCA sequence in tRNAs without using a nucleic acid template. Adds these three nucleotides in the order of C, C, and A to the tRNA nucleotide-73, using CTP and ATP as substrates and producing inorganic pyrophosphate. tRNA 3'-terminal CCA addition is required both for tRNA processing and repair. Also involved in tRNA surveillance by mediating tandem CCA addition to generate a CCACCA at the 3' terminus of unstable tRNAs. While stable tRNAs receive only 3'-terminal CCA, unstable tRNAs are marked with CCACCA and rapidly degraded. The sequence is that of Multifunctional CCA protein from Burkholderia orbicola (strain MC0-3).